Reading from the N-terminus, the 184-residue chain is ATP synthase subunit delta (184 aa).

Belongs to the ATPase delta chain family. In terms of assembly, F-type ATPases have 2 components, F(1) - the catalytic core - and F(0) - the membrane proton channel. F(1) has five subunits: alpha(3), beta(3), gamma(1), delta(1), epsilon(1). F(0) has three main subunits: a(1), b(2) and c(10-14). The alpha and beta chains form an alternating ring which encloses part of the gamma chain. F(1) is attached to F(0) by a central stalk formed by the gamma and epsilon chains, while a peripheral stalk is formed by the delta and b chains.

Its subcellular location is the cell membrane. Functionally, f(1)F(0) ATP synthase produces ATP from ADP in the presence of a proton or sodium gradient. F-type ATPases consist of two structural domains, F(1) containing the extramembraneous catalytic core and F(0) containing the membrane proton channel, linked together by a central stalk and a peripheral stalk. During catalysis, ATP synthesis in the catalytic domain of F(1) is coupled via a rotary mechanism of the central stalk subunits to proton translocation. Its function is as follows. This protein is part of the stalk that links CF(0) to CF(1). It either transmits conformational changes from CF(0) to CF(1) or is implicated in proton conduction. The sequence is that of ATP synthase subunit delta from Wolbachia pipientis subsp. Culex pipiens (strain wPip).